A 427-amino-acid chain; its full sequence is Putative F-box/FBD/LRR-repeat protein At4g13965 (427 aa).

An F-box domain is found at 13-61 (ADRISQLPEALIIQILSLLPTEVAVTTSVLSKQWQFLWKMLPKLNFDSL). 6 LRR repeats span residues 67 to 93 (FKTFSKNVKRALLSHKAPVLHSLHLIV), 98 to 122 (CNSMNTAKLIGIAFACNLRKLVLEV), 141 to 168 (TLELKYSILMDVPSSICLKSLRTLHLHY), 169 to 194 (VDFKDNESALNLLSGCPNLENLVVHR), 213 to 241 (LTIYTSSTVDPRAGYVINSPSLTYLKIVG), and 258 to 284 (SMIVSSQIINKNLLESLTSVKRLFLEF). The 51-residue stretch at 346–396 (KWNKPKIVPECLLFHLETFMWKGYEWKRNDETEVAKYILSNTNRLKRATFF) folds into the FBD domain.

This Arabidopsis thaliana (Mouse-ear cress) protein is Putative F-box/FBD/LRR-repeat protein At4g13965.